We begin with the raw amino-acid sequence, 150 residues long: Avidin-related protein 1 (150 aa).

The first 24 residues, 1–24 (MVHATSPLLLLLLLSLALVAPGLS), serve as a signal peptide directing secretion. An Avidin-like domain is found at 26 to 147 (RKCSLTGKWD…GNNDFTRQRT (122 aa)). A disulfide bridge links cysteine 28 with cysteine 105. 2 residues coordinate biotin: asparagine 36 and serine 40. Asparagine 54 carries N-linked (GlcNAc...) asparagine glycosylation. Biotin is bound by residues tyrosine 57, threonine 59, and aspartate 63. Residues asparagine 67 and asparagine 93 are each glycosylated (N-linked (GlcNAc...) asparagine). Residues serine 95, serine 99, and asparagine 140 each coordinate biotin.

Belongs to the avidin/streptavidin family. As to quaternary structure, homotetramer. Post-translationally, glycosylated.

Its subcellular location is the secreted. Its function is as follows. Forms a strong non-covalent specific complex with biotin. The protein is Avidin-related protein 1 (AVR1) of Gallus gallus (Chicken).